The chain runs to 383 residues: Lipid-A-disaccharide synthase (383 aa).

The protein belongs to the LpxB family.

It catalyses the reaction a lipid X + a UDP-2-N,3-O-bis[(3R)-3-hydroxyacyl]-alpha-D-glucosamine = a lipid A disaccharide + UDP + H(+). The protein operates within bacterial outer membrane biogenesis; LPS lipid A biosynthesis. Condensation of UDP-2,3-diacylglucosamine and 2,3-diacylglucosamine-1-phosphate to form lipid A disaccharide, a precursor of lipid A, a phosphorylated glycolipid that anchors the lipopolysaccharide to the outer membrane of the cell. The protein is Lipid-A-disaccharide synthase of Aliivibrio salmonicida (strain LFI1238) (Vibrio salmonicida (strain LFI1238)).